The chain runs to 369 residues: Probable dual-specificity RNA methyltransferase RlmN (369 aa).

The active-site Proton acceptor is E98. Positions 106–341 (STSRNTLCIS…VTVRKSRGAD (236 aa)) constitute a Radical SAM core domain. Residues C113 and C346 are joined by a disulfide bond. [4Fe-4S] cluster is bound by residues C120, C124, and C127. Residues 171-172 (GE), S204, 227-229 (SLH), and N303 contribute to the S-adenosyl-L-methionine site. C346 acts as the S-methylcysteine intermediate in catalysis.

It belongs to the radical SAM superfamily. RlmN family. The cofactor is [4Fe-4S] cluster.

The protein localises to the cytoplasm. The catalysed reaction is adenosine(2503) in 23S rRNA + 2 reduced [2Fe-2S]-[ferredoxin] + 2 S-adenosyl-L-methionine = 2-methyladenosine(2503) in 23S rRNA + 5'-deoxyadenosine + L-methionine + 2 oxidized [2Fe-2S]-[ferredoxin] + S-adenosyl-L-homocysteine. The enzyme catalyses adenosine(37) in tRNA + 2 reduced [2Fe-2S]-[ferredoxin] + 2 S-adenosyl-L-methionine = 2-methyladenosine(37) in tRNA + 5'-deoxyadenosine + L-methionine + 2 oxidized [2Fe-2S]-[ferredoxin] + S-adenosyl-L-homocysteine. Its function is as follows. Specifically methylates position 2 of adenine 2503 in 23S rRNA and position 2 of adenine 37 in tRNAs. This is Probable dual-specificity RNA methyltransferase RlmN from Chloroherpeton thalassium (strain ATCC 35110 / GB-78).